A 106-amino-acid polypeptide reads, in one-letter code: Trp operon repressor homolog (106 aa).

The DNA-binding element occupies 59 to 82; that stretch reads QREIQQILNTSAATITRGSNMIKI.

Belongs to the TrpR family. Homodimer.

The protein localises to the cytoplasm. In terms of biological role, this protein is an aporepressor. When complexed with L-tryptophan it binds the operator region of the trp operon and prevents the initiation of transcription. This chain is Trp operon repressor homolog, found in Histophilus somni (strain 129Pt) (Haemophilus somnus).